The chain runs to 650 residues: Probable LIM domain-containing serine/threonine-protein kinase DDB_G0287001 (650 aa).

LIM zinc-binding domains are found at residues 4-63 and 64-122; these read NNCG…KLNA and RKCF…PSDK. Disordered regions lie at residues 118-138, 171-197, and 293-320; these read KPSDKTKTTTPPPSEIPLPGK, LSSSGGSGNSISGSGGTNTGSSTSSFM, and LLNSSSPSPSTSSTSSTSSISQSQNLNT. Residues 173-188 show a composition bias toward gly residues; that stretch reads SSGGSGNSISGSGGTN. In terms of domain architecture, Protein kinase spans 386–643; the sequence is VAFGDVIASG…DTLKKISESL (258 aa). Residues 392–400 and Lys-413 contribute to the ATP site; that span reads IASGASGKV. Asp-509 functions as the Proton acceptor in the catalytic mechanism.

Belongs to the protein kinase superfamily. TKL Ser/Thr protein kinase family.

The catalysed reaction is L-seryl-[protein] + ATP = O-phospho-L-seryl-[protein] + ADP + H(+). The enzyme catalyses L-threonyl-[protein] + ATP = O-phospho-L-threonyl-[protein] + ADP + H(+). This Dictyostelium discoideum (Social amoeba) protein is Probable LIM domain-containing serine/threonine-protein kinase DDB_G0287001.